A 218-amino-acid chain; its full sequence is MSAAPPRLVVGLGNPGAEYSETRHNAGFWFCERLADTLGVRFSHESRFHGLVANAREAGVWLLMPQTYMNRSGQAIGALARFYRIAPAEILVVHDELDIPPGQLRLKFGGGLGGHNGLKDTSAHLGTNDYWRLRVGIGHPGDRNEVVNFVLKPARREEQTLIDESLDRALAAWPTLAKGDWNTATQRLNARPAPPKPPKAPKAPQPAAADQPKDESQP.

TRNA is bound at residue Y19. H24 acts as the Proton acceptor in catalysis. TRNA contacts are provided by Y68, N70, and N116. The interval 181–218 is disordered; sequence WNTATQRLNARPAPPKPPKAPKAPQPAAADQPKDESQP. The span at 192 to 204 shows a compositional bias: pro residues; sequence PAPPKPPKAPKAP.

It belongs to the PTH family. In terms of assembly, monomer.

It is found in the cytoplasm. It carries out the reaction an N-acyl-L-alpha-aminoacyl-tRNA + H2O = an N-acyl-L-amino acid + a tRNA + H(+). Functionally, hydrolyzes ribosome-free peptidyl-tRNAs (with 1 or more amino acids incorporated), which drop off the ribosome during protein synthesis, or as a result of ribosome stalling. Its function is as follows. Catalyzes the release of premature peptidyl moieties from peptidyl-tRNA molecules trapped in stalled 50S ribosomal subunits, and thus maintains levels of free tRNAs and 50S ribosomes. The polypeptide is Peptidyl-tRNA hydrolase (Azoarcus sp. (strain BH72)).